A 97-amino-acid chain; its full sequence is Unclassified hydrophobin F (97 aa).

The signal sequence occupies residues 1–17 (MRVSALAFAAVLSLVSA). Cystine bridges form between cysteine 24/cysteine 75, cysteine 39/cysteine 67, cysteine 40/cysteine 58, and cysteine 76/cysteine 85.

Its subcellular location is the secreted. The protein localises to the cell wall. Functionally, aerial growth, conidiation, and dispersal of filamentous fungi in the environment rely upon a capability of their secreting small amphipathic proteins called hydrophobins (HPBs) with low sequence identity. Class I can self-assemble into an outermost layer of rodlet bundles on aerial cell surfaces, conferring cellular hydrophobicity that supports fungal growth, development and dispersal; whereas Class II form highly ordered films at water-air interfaces through intermolecular interactions but contribute nothing to the rodlet structure. In P.expansum, hydrophobins contribute to germination, tolerance to cold stress and mycotoxins patulin and citrinin production. HfbC, HfbD, HfbE, and HfbF have functional redundancy in fungal surface hydrophobicity. The sequence is that of Unclassified hydrophobin F from Penicillium expansum (Blue mold rot fungus).